A 232-amino-acid chain; its full sequence is MIQKSKIKDLVVFTDENNSKYLNVLNDFLSYNINIIKVFRSIDDTKVMLIDTDYGKLILKVFSPKVKRNERFFKSLLKGDYYERLFEQTQKVRNEGLNTLNDFYLLAERKTLRFVHTYIMIIEYIDGIELCDMPDIDDALKNKIQQSINALHQHGMVSGDPHRGNFIIKNGEVRIIDLSGKRASAQRKAKDRIDLERHYGIKNEIRDLGYYLLVYRKKMRNFMRRLKGKPAR.

It belongs to the protein kinase superfamily. RfaY/WaaY family.

The catalysed reaction is alpha-D-Glc-(1-&gt;3)-[L-alpha-D-Hep-(1-&gt;7)]-L-alpha-D-Hep-(1-&gt;3)-4-O-PO3(2-)-L-alpha-D-Hep-(1-&gt;5)-[alpha-Kdo-(2-&gt;4)]-alpha-Kdo-(2-&gt;6)-lipid A + ATP = alpha-D-Glc-(1-&gt;3)-[L-alpha-D-Hep-(1-&gt;7)]-4-O-PO3(2-)-L-alpha-D-Hep-(1-&gt;3)-4-O-PO3(2-)-L-alpha-D-Hep-(1-&gt;5)-[alpha-Kdo-(2-&gt;4)]-alpha-Kdo-(2-&gt;6)-lipid A + ADP + H(+). It functions in the pathway bacterial outer membrane biogenesis; LPS core biosynthesis. Kinase involved in the biosynthesis of the core oligosaccharide region of lipopolysaccharide (LPS). Catalyzes the phosphorylation of the second heptose unit (HepII) of the inner core. This Escherichia coli (strain K12) protein is Lipopolysaccharide core heptose(II) kinase WaaY.